The primary structure comprises 1322 residues: Phosphoribosylformylglycinamidine synthase (1322 aa).

300-311 is a binding site for ATP; that stretch reads GASTGAGGEIRD. Over residues 593–608 the composition is skewed to polar residues; it reads QQTPQRANHTETSPTP. Residues 593-613 form a disordered region; that stretch reads QQTPQRANHTETSPTPNTLPP. Position 702 (Ala-702) interacts with ATP. The Mg(2+) site is built by Asp-703, Glu-742, Asn-746, and Asp-915. Residue Ser-917 participates in ATP binding. Positions 1073-1322 constitute a Glutamine amidotransferase type-1 domain; the sequence is VAILREQGIN…LFRNARAWVG (250 aa). Catalysis depends on Cys-1166, which acts as the Nucleophile. Residues His-1287 and Glu-1289 contribute to the active site.

The protein in the N-terminal section; belongs to the FGAMS family. As to quaternary structure, monomer.

Its subcellular location is the cytoplasm. The enzyme catalyses N(2)-formyl-N(1)-(5-phospho-beta-D-ribosyl)glycinamide + L-glutamine + ATP + H2O = 2-formamido-N(1)-(5-O-phospho-beta-D-ribosyl)acetamidine + L-glutamate + ADP + phosphate + H(+). Its pathway is purine metabolism; IMP biosynthesis via de novo pathway; 5-amino-1-(5-phospho-D-ribosyl)imidazole from N(2)-formyl-N(1)-(5-phospho-D-ribosyl)glycinamide: step 1/2. In terms of biological role, phosphoribosylformylglycinamidine synthase involved in the purines biosynthetic pathway. Catalyzes the ATP-dependent conversion of formylglycinamide ribonucleotide (FGAR) and glutamine to yield formylglycinamidine ribonucleotide (FGAM) and glutamate. In Xylella fastidiosa (strain 9a5c), this protein is Phosphoribosylformylglycinamidine synthase.